A 646-amino-acid polypeptide reads, in one-letter code: Vitamin K-dependent protein S (646 aa).

Residues 1-12 constitute a propeptide that is removed on maturation; that stretch reads GHASQVLVRKRR. The 46-residue stretch at 13-58 folds into the Gla domain; that stretch reads ANSMLEETKKGNLERECIEELCNKEEAREVFENDPETDYFYPKYLG. A 4-carboxyglutamate mark is found at glutamate 18, glutamate 19, glutamate 26, glutamate 28, glutamate 31, glutamate 32, glutamate 37, glutamate 38, glutamate 41, glutamate 44, and glutamate 48. Cysteine 29 and cysteine 34 are oxidised to a cystine. The thrombin-sensitive stretch occupies residues 59–87; that stretch reads CLGSFRAKLFTATRRSANGYPDLRSCVNA. One can recognise an EGF-like 1 domain in the interval 88–126; that stretch reads IPDQCNPLPCSEEGYLNCKDGQATFTCICKPGWQGEKCE. Cystine bridges form between cysteine 92–cysteine 105, cysteine 97–cysteine 114, cysteine 116–cysteine 125, cysteine 132–cysteine 146, cysteine 142–cysteine 155, cysteine 157–cysteine 170, cysteine 176–cysteine 188, cysteine 183–cysteine 197, cysteine 199–cysteine 212, cysteine 218–cysteine 227, cysteine 223–cysteine 236, cysteine 238–cysteine 253, and cysteine 420–cysteine 446. Aspartate 107 bears the (3R)-3-hydroxyaspartate mark. The 44-residue stretch at 128–171 folds into the EGF-like 2; calcium-binding domain; that stretch reads DINECKDPTNINGGCSQICDNTAGSYHCSCKSGFVMLANEKDCK. The EGF-like 3; calcium-binding domain maps to 172–213; the sequence is DMDECSVKPSVCGTAVCKNTPGDFECECSEGYRYNPTAKSCE. Positions 214–254 constitute an EGF-like 4; calcium-binding domain; the sequence is DIDECSENMCAQLCVNYPGGYSCYCDGKKGFKLAQDKKSCE. Laminin G-like domains are found at residues 270–446 and 455–636; these read LLYL…KKHC and YYPG…AHSC. Residues asparagine 470 and asparagine 480 are each glycosylated (N-linked (GlcNAc...) asparagine). Cysteine 609 and cysteine 636 are disulfide-bonded.

As to quaternary structure, interacts with C4b-binding protein, a regulator of the complex system. In rabbit plasma however, protein S appears to be present only in free form. Post-translationally, the iron and 2-oxoglutarate dependent 3-hydroxylation of aspartate and asparagine is (R) stereospecific within EGF domains. As to expression, plasma.

Its subcellular location is the secreted. Anticoagulant plasma protein; it is a cofactor to activated protein C in the degradation of coagulation factors Va and VIIIa. It helps to prevent coagulation and stimulating fibrinolysis. This is Vitamin K-dependent protein S (PROS1) from Oryctolagus cuniculus (Rabbit).